A 379-amino-acid polypeptide reads, in one-letter code: METLFHTLLRLLLFVAISHTLSPLAGSFRISNDFPAVFNFGDSNSDTGELSSGLGFLPQPSYEITFFRSPTSGRFCNGRLIVDFLMEAIDRPYLRPYLDSISRQTYRRGCNFAAAASTIQKANAASYSPFGFGVQVSQFITFKSKVLQLIQQDEELQRYLPSEYFFSNGLYMFDIGQNDIAGAFYTKTVDQVLALVPIILDIFQDGIKRLYAEGARNYWIHNTGPLGCLAQVVSIFGEDKSKLDEFGCVSDHNQAAKLFNLQLHGLFKKLPQQYPNSRFTYVDIFSIKSDLILNHSKYGFDHSIMVCCGTGGPPLNYDDQVGCGKTARSNGTIITAKPCYDSSKYVNWDGIHYTEAANRFVALHILTGKYSETASSLNL.

The signal sequence occupies residues 1–27 (METLFHTLLRLLLFVAISHTLSPLAGS). Ser43 functions as the Nucleophile in the catalytic mechanism. N-linked (GlcNAc...) asparagine glycans are attached at residues Asn294 and Asn330. Active-site residues include Asp349 and His352.

The protein belongs to the 'GDSL' lipolytic enzyme family.

It localises to the secreted. This Arabidopsis thaliana (Mouse-ear cress) protein is GDSL esterase/lipase At3g05180.